The primary structure comprises 297 residues: Polyamine aminopropyltransferase 2 (297 aa).

The 233-residue stretch at 26 to 258 (FYWEPDVEGG…DLWTFFVALK (233 aa)) folds into the PABS domain. Gln53 lines the S-methyl-5'-thioadenosine pocket. Residues His84 and Glu108 each contribute to the spermidine site. S-methyl-5'-thioadenosine-binding positions include Asp128 and 157–158 (DV). The active-site Proton acceptor is the Asp176. An S-methyl-5'-thioadenosine-binding site is contributed by Pro184.

The protein belongs to the spermidine/spermine synthase family. Homodimer or homotetramer.

The protein resides in the cytoplasm. It carries out the reaction S-adenosyl 3-(methylsulfanyl)propylamine + putrescine = S-methyl-5'-thioadenosine + spermidine + H(+). Its pathway is amine and polyamine biosynthesis; spermidine biosynthesis; spermidine from putrescine: step 1/1. Its function is as follows. Catalyzes the irreversible transfer of a propylamine group from the amino donor S-adenosylmethioninamine (decarboxy-AdoMet) to putrescine (1,4-diaminobutane) to yield spermidine. This Caldanaerobacter subterraneus subsp. tengcongensis (strain DSM 15242 / JCM 11007 / NBRC 100824 / MB4) (Thermoanaerobacter tengcongensis) protein is Polyamine aminopropyltransferase 2.